A 319-amino-acid chain; its full sequence is Alpha-hemolysin (319 aa).

Residues 1–26 form the signal peptide; the sequence is MKTRIVSSVTTTLLLGSILMNPVANA.

The protein belongs to the aerolysin family. As to quaternary structure, self-assembles to form first a non-lytic oligomeric intermediate and then, a mushroom-shaped homoheptamer structure of 100 Angstroms in length and up to 100 Angstroms in diameter.

It is found in the secreted. Alpha-toxin binds to the membrane of eukaryotic cells resulting in the release of low-molecular weight molecules and leading to an eventual osmotic lysis. Inhibits host neutrophil chemotaxis to the lesion region. Heptamer oligomerization and pore formation is required for lytic activity. The chain is Alpha-hemolysin (hly) from Staphylococcus aureus (strain NCTC 8325 / PS 47).